The sequence spans 120 residues: Large ribosomal subunit protein uL18 (120 aa).

This sequence belongs to the universal ribosomal protein uL18 family. Part of the 50S ribosomal subunit; part of the 5S rRNA/L5/L18/L25 subcomplex. Contacts the 5S and 23S rRNAs.

Its function is as follows. This is one of the proteins that bind and probably mediate the attachment of the 5S RNA into the large ribosomal subunit, where it forms part of the central protuberance. The chain is Large ribosomal subunit protein uL18 from Methylocella silvestris (strain DSM 15510 / CIP 108128 / LMG 27833 / NCIMB 13906 / BL2).